Reading from the N-terminus, the 171-residue chain is Tetratricopeptide repeat protein 9C (171 aa).

3 TPR repeats span residues 8-41, 72-107, and 108-141; these read AQLYKEKGNQCYREGKYRDAVSGYHRALLQLRGL, TDCYNNLAACLLQMEPVNYERVKEYSQKVLERQPDN, and AKALYRAGVAFFHLQDYDQARHYLMAAVNRKPKD.

The protein belongs to the TTC9 family.

The protein is Tetratricopeptide repeat protein 9C (TTC9C) of Bos taurus (Bovine).